The sequence spans 155 residues: Small ribosomal subunit protein uS7 (155 aa).

It belongs to the universal ribosomal protein uS7 family. As to quaternary structure, part of the 30S ribosomal subunit. Contacts proteins S9 and S11.

Its function is as follows. One of the primary rRNA binding proteins, it binds directly to 16S rRNA where it nucleates assembly of the head domain of the 30S subunit. Is located at the subunit interface close to the decoding center, probably blocks exit of the E-site tRNA. The chain is Small ribosomal subunit protein uS7 from Nautilia profundicola (strain ATCC BAA-1463 / DSM 18972 / AmH).